The primary structure comprises 759 residues: Tripartite motif-containing protein 46 (759 aa).

The segment at 1–166 (MAEGEDMQTF…VERYRQSVSV (166 aa)) is required for proximal axon localization, axon formation and migration. Residues 33–59 (CPVCQEMYKQPLVLPCTHNVCQACARE) form an RING-type 1; degenerate zinc finger. The interval 67-98 (IGHGGDPSSEPTSPASTPSTRSPRLSRRTLPK) is disordered. Low complexity predominate over residues 73–89 (PSSEPTSPASTPSTRSP). An RING-type 2; degenerate zinc finger spans residues 172-231 (CQLCKPPPLEATKGCTECRATFCNECFKLFHPWGTQKAQHEPTLPTLSFRPKGLMCPDHK). The B box-type zinc-finger motif lies at 222–263 (PKGLMCPDHKEEVTHYCKTCQRLVCQLCRVRRTHSGHKITPV). Positions 227, 230, 249, and 255 each coordinate Zn(2+). Residues 322–400 (AVLEEKRASL…RATEALQTFR (79 aa)) are a coiled coil. The residue at position 330 (Ser330) is a Phosphoserine. In terms of domain architecture, COS spans 370-427 (LKETDQPCFVQAAKQLHNRIARATEALQTFRPAASSSFRHCQLDVGREMKLLTELSFL). The tract at residues 411 to 429 (QLDVGREMKLLTELSFLRV) is required for microtubule association, proximal axon localization and axon formation. The Fibronectin type-III domain occupies 429-528 (VPEAPVIDTQ…EDVHLHTPPA (100 aa)). The B30.2/SPRY domain maps to 526–747 (PPAPVLHFFL…LQEPVGTKPE (222 aa)). Ser627 carries the phosphoserine modification.

The protein belongs to the TRIM/RBCC family. In terms of assembly, interacts with TUBB3 and TUBA4A. In terms of tissue distribution, expressed in the central nervous system, including pyramidal neurons and interneurons in the cortex and hippocampus and all neuronal cell types in the cerebral and cerebellar cortex, and in the peripheral nervous system, including the dorsal root ganglion neurons.

It localises to the cell projection. It is found in the axon. The protein localises to the cytoplasm. Its subcellular location is the cytoskeleton. Its function is as follows. Microtubule-associated protein that is involved in the formation of parallel microtubule bundles linked by cross-bridges in the proximal axon. Required for the uniform orientation and maintenance of the parallel microtubule fascicles, which are important for efficient cargo delivery and trafficking in axons. Thereby also required for proper axon formation, the establishment of neuronal polarity and proper neuronal migration. The polypeptide is Tripartite motif-containing protein 46 (Trim46) (Mus musculus (Mouse)).